The following is a 163-amino-acid chain: Large ribosomal subunit protein uL11 (163 aa).

The tract at residues 1-25 (MAGTIEVLVAGGQADPGPPLGPELG) is disordered.

It belongs to the universal ribosomal protein uL11 family. As to quaternary structure, part of the ribosomal stalk of the 50S ribosomal subunit. Interacts with L10 and the large rRNA to form the base of the stalk. L10 forms an elongated spine to which L12 dimers bind in a sequential fashion forming a multimeric L10(L12)X complex.

Its function is as follows. Forms part of the ribosomal stalk which helps the ribosome interact with GTP-bound translation factors. This chain is Large ribosomal subunit protein uL11, found in Natronomonas pharaonis (strain ATCC 35678 / DSM 2160 / CIP 103997 / JCM 8858 / NBRC 14720 / NCIMB 2260 / Gabara) (Halobacterium pharaonis).